The following is a 526-amino-acid chain: Cytochrome P450 monooxygenase milC (526 aa).

The helical transmembrane segment at A2 to A20 threads the bilayer. C470 contacts heme.

Belongs to the cytochrome P450 family. Heme is required as a cofactor.

Its subcellular location is the membrane. It catalyses the reaction cordypyrone A + reduced [NADPH--hemoprotein reductase] + O2 = cordypyrone B + oxidized [NADPH--hemoprotein reductase] + H2O + H(+). It functions in the pathway secondary metabolite biosynthesis. In terms of biological role, cytochrome P450 monooxygenase; part of the gene cluster that mediates the biosynthesis of cordypyrones A and B, 2 pyrones that show modest activities against pathogenic bacteria including methicillin-resistant Staphylococcus aureus (MRSA), Mycobacterium tuberculosis and Bacillus cereus. The HR-PKS milA catalyzes the formation of cordypyrones A via condensation of one acetate with 10 malonate units. Since milA lacks an enoyl reductase domain, the 2 beta-keto processing domains DH and KR of milA collaborate with the trans-enoyl reductase milB to catalyze the different levels of reduction. The cytochrome P450 monooxygenase milC then hydroxylates the C-22 of cordypyrones A to yield cordypyrones B. The sequence is that of Cytochrome P450 monooxygenase milC from Cordyceps militaris (strain CM01) (Caterpillar fungus).